The sequence spans 192 residues: Superoxide dismutase [Fe] (192 aa).

4 residues coordinate Fe cation: histidine 27, histidine 74, aspartate 157, and histidine 161.

Belongs to the iron/manganese superoxide dismutase family. In terms of assembly, homodimer. Requires Fe cation as cofactor.

The enzyme catalyses 2 superoxide + 2 H(+) = H2O2 + O2. Destroys superoxide anion radicals which are normally produced within the cells and which are toxic to biological systems. The sequence is that of Superoxide dismutase [Fe] (sodB) from Legionella pneumophila subsp. pneumophila (strain Philadelphia 1 / ATCC 33152 / DSM 7513).